Here is a 186-residue protein sequence, read N- to C-terminus: Dehydrin Rab18 (186 aa).

The interval M1 to R186 is disordered. Residues P30–G85 show a composition bias toward gly residues. A compositionally biased stretch (basic and acidic residues) spans H89–S98. Positions M105–S116 are enriched in low complexity. Residues K133–Q144 show a composition bias toward basic and acidic residues. The segment covering G152–G164 has biased composition (gly residues). The segment covering G165–R186 has biased composition (basic and acidic residues).

This sequence belongs to the plant dehydrin family.

The protein is Dehydrin Rab18 (RAB18) of Arabidopsis thaliana (Mouse-ear cress).